The sequence spans 159 residues: Odorant-binding protein (159 aa).

Belongs to the calycin superfamily. Lipocalin family. Homodimer.

Its subcellular location is the secreted. In terms of biological role, this protein binds a wide variety of chemical odorants. This Bos taurus (Bovine) protein is Odorant-binding protein.